Here is a 309-residue protein sequence, read N- to C-terminus: UDP-N-acetylenolpyruvoylglucosamine reductase (309 aa).

Positions 40-204 (LGGKVPLFAI…LQATFKLKKG (165 aa)) constitute an FAD-binding PCMH-type domain. Arg182 is a catalytic residue. Ser233 (proton donor) is an active-site residue. Residue Glu304 is part of the active site.

This sequence belongs to the MurB family. The cofactor is FAD.

The protein resides in the cytoplasm. It carries out the reaction UDP-N-acetyl-alpha-D-muramate + NADP(+) = UDP-N-acetyl-3-O-(1-carboxyvinyl)-alpha-D-glucosamine + NADPH + H(+). It functions in the pathway cell wall biogenesis; peptidoglycan biosynthesis. Cell wall formation. In Fervidobacterium nodosum (strain ATCC 35602 / DSM 5306 / Rt17-B1), this protein is UDP-N-acetylenolpyruvoylglucosamine reductase.